Reading from the N-terminus, the 234-residue chain is Thiamine import ATP-binding protein ThiQ (234 aa).

In terms of domain architecture, ABC transporter spans 2-230 (LVLDDVQYTY…HPSKTLQAFV (229 aa)). 32–39 (GPSGAGKS) is an ATP binding site.

Belongs to the ABC transporter superfamily. Thiamine importer (TC 3.A.1.19.1) family. As to quaternary structure, the complex is composed of two ATP-binding proteins (ThiQ), two transmembrane proteins (ThiP) and a solute-binding protein (ThiB).

It is found in the cell inner membrane. It carries out the reaction thiamine(out) + ATP + H2O = thiamine(in) + ADP + phosphate + H(+). Part of the ABC transporter complex ThiBPQ involved in thiamine import. Responsible for energy coupling to the transport system. In Vibrio parahaemolyticus serotype O3:K6 (strain RIMD 2210633), this protein is Thiamine import ATP-binding protein ThiQ.